The primary structure comprises 390 residues: LL-diaminopimelate aminotransferase (390 aa).

The substrate site is built by Tyr13, Gly38, Lys102, Tyr126, and Asn176. Residues 101-102 (SK), Tyr126, Asn176, Tyr207, and 235-237 (SVS) contribute to the pyridoxal 5'-phosphate site. Residue Lys238 is modified to N6-(pyridoxal phosphate)lysine. Position 246 (Arg246) interacts with pyridoxal 5'-phosphate. Arg364 contributes to the substrate binding site.

Belongs to the class-I pyridoxal-phosphate-dependent aminotransferase family. LL-diaminopimelate aminotransferase subfamily. As to quaternary structure, homodimer. It depends on pyridoxal 5'-phosphate as a cofactor.

The catalysed reaction is (2S,6S)-2,6-diaminopimelate + 2-oxoglutarate = (S)-2,3,4,5-tetrahydrodipicolinate + L-glutamate + H2O + H(+). Its pathway is amino-acid biosynthesis; L-lysine biosynthesis via DAP pathway; LL-2,6-diaminopimelate from (S)-tetrahydrodipicolinate (aminotransferase route): step 1/1. In terms of biological role, involved in the synthesis of meso-diaminopimelate (m-DAP or DL-DAP), required for both lysine and peptidoglycan biosynthesis. Catalyzes the direct conversion of tetrahydrodipicolinate to LL-diaminopimelate. Is also able to catalyze the reverse reaction in vitro, i.e. the transamination of LL-diaminopimelate with 2-oxoglutarate to produce tetrahydrodipicolinate and glutamate. Can also use m-DAP instead of LL-DAP as the amino-group donor, and oxaloacetate instead of 2-oxoglutarate as the amino-group acceptor. The sequence is that of LL-diaminopimelate aminotransferase from Moorella thermoacetica (strain ATCC 39073 / JCM 9320).